Reading from the N-terminus, the 335-residue chain is Glycerol-3-phosphate dehydrogenase [NAD(P)+] (335 aa).

NADPH contacts are provided by serine 12, tryptophan 13, and lysine 107. The sn-glycerol 3-phosphate site is built by lysine 107, glycine 138, and serine 140. An NADPH-binding site is contributed by alanine 142. 5 residues coordinate sn-glycerol 3-phosphate: lysine 193, aspartate 246, serine 256, arginine 257, and asparagine 258. Catalysis depends on lysine 193, which acts as the Proton acceptor. Arginine 257 is a binding site for NADPH. NADPH contacts are provided by valine 281 and glutamate 283.

It belongs to the NAD-dependent glycerol-3-phosphate dehydrogenase family.

The protein localises to the cytoplasm. It catalyses the reaction sn-glycerol 3-phosphate + NAD(+) = dihydroxyacetone phosphate + NADH + H(+). It carries out the reaction sn-glycerol 3-phosphate + NADP(+) = dihydroxyacetone phosphate + NADPH + H(+). Its pathway is membrane lipid metabolism; glycerophospholipid metabolism. Functionally, catalyzes the reduction of the glycolytic intermediate dihydroxyacetone phosphate (DHAP) to sn-glycerol 3-phosphate (G3P), the key precursor for phospholipid synthesis. This is Glycerol-3-phosphate dehydrogenase [NAD(P)+] from Geobacter metallireducens (strain ATCC 53774 / DSM 7210 / GS-15).